A 156-amino-acid polypeptide reads, in one-letter code: ATP synthase subunit b (156 aa).

A helical transmembrane segment spans residues 12–32 (IAFAIFVLFCMKFIWPALMGA).

The protein belongs to the ATPase B chain family. In terms of assembly, F-type ATPases have 2 components, F(1) - the catalytic core - and F(0) - the membrane proton channel. F(1) has five subunits: alpha(3), beta(3), gamma(1), delta(1), epsilon(1). F(0) has three main subunits: a(1), b(2) and c(10-14). The alpha and beta chains form an alternating ring which encloses part of the gamma chain. F(1) is attached to F(0) by a central stalk formed by the gamma and epsilon chains, while a peripheral stalk is formed by the delta and b chains.

Its subcellular location is the cell inner membrane. Functionally, f(1)F(0) ATP synthase produces ATP from ADP in the presence of a proton or sodium gradient. F-type ATPases consist of two structural domains, F(1) containing the extramembraneous catalytic core and F(0) containing the membrane proton channel, linked together by a central stalk and a peripheral stalk. During catalysis, ATP synthesis in the catalytic domain of F(1) is coupled via a rotary mechanism of the central stalk subunits to proton translocation. Component of the F(0) channel, it forms part of the peripheral stalk, linking F(1) to F(0). This is ATP synthase subunit b from Psychrobacter sp. (strain PRwf-1).